Here is a 542-residue protein sequence, read N- to C-terminus: CTP synthase (542 aa).

The interval 1-265 is amidoligase domain; that stretch reads MTRYIFVTGG…DQLVIERFGL (265 aa). A CTP-binding site is contributed by Ser-13. UTP is bound at residue Ser-13. Residues 14–19 and Asp-71 each bind ATP; that span reads SLGKGI. Positions 71 and 139 each coordinate Mg(2+). CTP-binding positions include 146–148, 186–191, and Lys-222; these read DIE and KTKPTQ. Residues 186–191 and Lys-222 contribute to the UTP site; that span reads KTKPTQ. A Glutamine amidotransferase type-1 domain is found at 290-541; the sequence is TIAMVGKYME…VEAALANKKG (252 aa). Gly-351 is an L-glutamine binding site. The active-site Nucleophile; for glutamine hydrolysis is the Cys-378. L-glutamine contacts are provided by residues 379 to 382, Glu-402, and Arg-469; that span reads LGMQ. Catalysis depends on residues His-514 and Glu-516.

The protein belongs to the CTP synthase family. As to quaternary structure, homotetramer.

The catalysed reaction is UTP + L-glutamine + ATP + H2O = CTP + L-glutamate + ADP + phosphate + 2 H(+). The enzyme catalyses L-glutamine + H2O = L-glutamate + NH4(+). It carries out the reaction UTP + NH4(+) + ATP = CTP + ADP + phosphate + 2 H(+). Its pathway is pyrimidine metabolism; CTP biosynthesis via de novo pathway; CTP from UDP: step 2/2. Its activity is regulated as follows. Allosterically activated by GTP, when glutamine is the substrate; GTP has no effect on the reaction when ammonia is the substrate. The allosteric effector GTP functions by stabilizing the protein conformation that binds the tetrahedral intermediate(s) formed during glutamine hydrolysis. Inhibited by the product CTP, via allosteric rather than competitive inhibition. Functionally, catalyzes the ATP-dependent amination of UTP to CTP with either L-glutamine or ammonia as the source of nitrogen. Regulates intracellular CTP levels through interactions with the four ribonucleotide triphosphates. The sequence is that of CTP synthase from Marinobacter nauticus (strain ATCC 700491 / DSM 11845 / VT8) (Marinobacter aquaeolei).